The following is a 415-amino-acid chain: Serine hydroxymethyltransferase (415 aa).

(6S)-5,6,7,8-tetrahydrofolate-binding positions include Leu117 and 121–123 (GHL). Lys226 bears the N6-(pyridoxal phosphate)lysine mark. Glu241 serves as a coordination point for (6S)-5,6,7,8-tetrahydrofolate.

The protein belongs to the SHMT family. Homodimer. Pyridoxal 5'-phosphate is required as a cofactor.

The protein resides in the cytoplasm. It carries out the reaction (6R)-5,10-methylene-5,6,7,8-tetrahydrofolate + glycine + H2O = (6S)-5,6,7,8-tetrahydrofolate + L-serine. It participates in one-carbon metabolism; tetrahydrofolate interconversion. The protein operates within amino-acid biosynthesis; glycine biosynthesis; glycine from L-serine: step 1/1. Its function is as follows. Catalyzes the reversible interconversion of serine and glycine with tetrahydrofolate (THF) serving as the one-carbon carrier. This reaction serves as the major source of one-carbon groups required for the biosynthesis of purines, thymidylate, methionine, and other important biomolecules. Also exhibits THF-independent aldolase activity toward beta-hydroxyamino acids, producing glycine and aldehydes, via a retro-aldol mechanism. This Bacillus velezensis (strain DSM 23117 / BGSC 10A6 / LMG 26770 / FZB42) (Bacillus amyloliquefaciens subsp. plantarum) protein is Serine hydroxymethyltransferase.